A 405-amino-acid chain; its full sequence is Riboflavin biosynthesis protein RibBA (405 aa).

The tract at residues 1-205 is DHBP synthase; sequence MSEIQLNTIE…IKDLIAYRLR (205 aa). Residues 30–31, Asp-35, 144–148, and Glu-168 contribute to the D-ribulose 5-phosphate site; these read RE and RAGHT. Residue Glu-31 coordinates Mg(2+). Residue His-147 coordinates Mg(2+). The segment at 206–405 is GTP cyclohydrolase II; sequence TESIVENGVE…RMGHVLHNIK (200 aa). 256–260 is a GTP binding site; sequence RVHSS. Residues Cys-261, Cys-272, and Cys-274 each contribute to the Zn(2+) site. Residues Gln-277, 299 to 301, and Thr-321 each bind GTP; that span reads EGR. Asp-333 (proton acceptor; for GTP cyclohydrolase activity) is an active-site residue. The active-site Nucleophile; for GTP cyclohydrolase activity is the Arg-335. Residues Ser-356 and Lys-361 each coordinate GTP.

The protein in the N-terminal section; belongs to the DHBP synthase family. It in the C-terminal section; belongs to the GTP cyclohydrolase II family. The cofactor is Mg(2+). Requires Mn(2+) as cofactor. Zn(2+) is required as a cofactor.

It carries out the reaction D-ribulose 5-phosphate = (2S)-2-hydroxy-3-oxobutyl phosphate + formate + H(+). It catalyses the reaction GTP + 4 H2O = 2,5-diamino-6-hydroxy-4-(5-phosphoribosylamino)-pyrimidine + formate + 2 phosphate + 3 H(+). It participates in cofactor biosynthesis; riboflavin biosynthesis; 2-hydroxy-3-oxobutyl phosphate from D-ribulose 5-phosphate: step 1/1. Its pathway is cofactor biosynthesis; riboflavin biosynthesis; 5-amino-6-(D-ribitylamino)uracil from GTP: step 1/4. Functionally, catalyzes the conversion of D-ribulose 5-phosphate to formate and 3,4-dihydroxy-2-butanone 4-phosphate. Catalyzes the conversion of GTP to 2,5-diamino-6-ribosylamino-4(3H)-pyrimidinone 5'-phosphate (DARP), formate and pyrophosphate. This chain is Riboflavin biosynthesis protein RibBA, found in Parabacteroides distasonis (strain ATCC 8503 / DSM 20701 / CIP 104284 / JCM 5825 / NCTC 11152).